The sequence spans 587 residues: Aspartate--tRNA ligase (587 aa).

An L-aspartate-binding site is contributed by Glu-174. The interval 198-201 (QITK) is aspartate. Arg-220 contributes to the L-aspartate binding site. Residues 220 to 222 (RDE) and Gln-229 contribute to the ATP site. Residue His-443 coordinates L-aspartate. Glu-477 provides a ligand contact to ATP. L-aspartate is bound at residue Arg-484. 529-532 (GLDR) serves as a coordination point for ATP.

The protein belongs to the class-II aminoacyl-tRNA synthetase family. Type 1 subfamily. Homodimer.

It localises to the cytoplasm. It catalyses the reaction tRNA(Asp) + L-aspartate + ATP = L-aspartyl-tRNA(Asp) + AMP + diphosphate. Catalyzes the attachment of L-aspartate to tRNA(Asp) in a two-step reaction: L-aspartate is first activated by ATP to form Asp-AMP and then transferred to the acceptor end of tRNA(Asp). This is Aspartate--tRNA ligase from Streptococcus pneumoniae serotype 4 (strain ATCC BAA-334 / TIGR4).